The following is a 386-amino-acid chain: Histidine decarboxylase (386 aa).

Position 120 (His-120) interacts with substrate. Lys-233 is modified (N6-(pyridoxal phosphate)lysine).

This sequence belongs to the group II decarboxylase family. Homotetramer. Requires pyridoxal 5'-phosphate as cofactor.

The catalysed reaction is L-histidine + H(+) = histamine + CO2. The sequence is that of Histidine decarboxylase from Vibrio campbellii (strain ATCC BAA-1116).